Here is a 39-residue protein sequence, read N- to C-terminus: Phosphate starvation-inducible protein 1 (39 aa).

It localises to the cell outer membrane. In Pseudomonas fluorescens, this protein is Phosphate starvation-inducible protein 1.